Reading from the N-terminus, the 273-residue chain is Bis(5'-nucleosyl)-tetraphosphatase, symmetrical (273 aa).

The protein belongs to the Ap4A hydrolase family.

It catalyses the reaction P(1),P(4)-bis(5'-adenosyl) tetraphosphate + H2O = 2 ADP + 2 H(+). Hydrolyzes diadenosine 5',5'''-P1,P4-tetraphosphate to yield ADP. The polypeptide is Bis(5'-nucleosyl)-tetraphosphatase, symmetrical (Histophilus somni (strain 129Pt) (Haemophilus somnus)).